Here is a 240-residue protein sequence, read N- to C-terminus: UDP-2,3-diacylglucosamine hydrolase (240 aa).

The Mn(2+) site is built by Asp7, His9, Asp40, Asn78, and His113. A substrate-binding site is contributed by 78 to 79 (NR). Residues Asp121, Ser159, Lys166, and His194 each coordinate substrate. Mn(2+) contacts are provided by His194 and His196.

This sequence belongs to the LpxH family. It depends on Mn(2+) as a cofactor.

Its subcellular location is the cell inner membrane. It carries out the reaction UDP-2-N,3-O-bis[(3R)-3-hydroxytetradecanoyl]-alpha-D-glucosamine + H2O = 2-N,3-O-bis[(3R)-3-hydroxytetradecanoyl]-alpha-D-glucosaminyl 1-phosphate + UMP + 2 H(+). The protein operates within glycolipid biosynthesis; lipid IV(A) biosynthesis; lipid IV(A) from (3R)-3-hydroxytetradecanoyl-[acyl-carrier-protein] and UDP-N-acetyl-alpha-D-glucosamine: step 4/6. Its function is as follows. Hydrolyzes the pyrophosphate bond of UDP-2,3-diacylglucosamine to yield 2,3-diacylglucosamine 1-phosphate (lipid X) and UMP by catalyzing the attack of water at the alpha-P atom. Involved in the biosynthesis of lipid A, a phosphorylated glycolipid that anchors the lipopolysaccharide to the outer membrane of the cell. The chain is UDP-2,3-diacylglucosamine hydrolase from Pseudomonas putida (strain ATCC 700007 / DSM 6899 / JCM 31910 / BCRC 17059 / LMG 24140 / F1).